Reading from the N-terminus, the 285-residue chain is Protein phosphatase 1 regulatory subunit 3C (285 aa).

The PP1-binding motif signature appears at 72 to 75 (KVVF). A CBM21 domain is found at 133–241 (RKRLMKNSVC…NNNGKNYALV (109 aa)).

As to quaternary structure, interacts with PPP1CC catalytic subunit of PP1 and associates with glycogen. Forms complexes with glycogen phosphorylase, glycogen synthase and phosphorylase kinase which is necessary for its regulation of PP1 activity. As to expression, ubiquitously expressed in the examined tissues including brain, muscle, liver and spleen under normoxic condition. Its expression is higher in insulin sensitive tissues (liver and muscle) than in the brain and spleen. Significantly increased expression in the liver and muscle under short-term (1-12 hours) hypoxia exposure. Significantly increased expression after long-term (natural) hypoxia exposure in liver and spleen. No significant differences in expression in brain for any time periods.

Its function is as follows. Acts as a glycogen-targeting subunit for PP1 and regulates its activity. Activates glycogen synthase, reduces glycogen phosphorylase activity and limits glycogen breakdown. The polypeptide is Protein phosphatase 1 regulatory subunit 3C (Clarias batrachus (Walking catfish)).